The sequence spans 314 residues: tRNA pseudouridine synthase B (314 aa).

Aspartate 41 acts as the Nucleophile in catalysis.

The protein belongs to the pseudouridine synthase TruB family. Type 1 subfamily.

The catalysed reaction is uridine(55) in tRNA = pseudouridine(55) in tRNA. Its function is as follows. Responsible for synthesis of pseudouridine from uracil-55 in the psi GC loop of transfer RNAs. The polypeptide is tRNA pseudouridine synthase B (Prochlorococcus marinus (strain NATL1A)).